The following is a 435-amino-acid chain: Nucleoredoxin (435 aa).

Position 2 is an N-acetylserine (S2). Positions 167 to 321 (PKPFREVIAG…VLELSDSNAA (155 aa)) constitute a Thioredoxin domain.

This sequence belongs to the nucleoredoxin family. As to quaternary structure, associates with the phosphatase 2A holoenzyme. Interacts with PPP2CA; the interaction is direct. Interacts with DVL1 (via PDZ domain); the interaction is direct and regulated by oxidative stress.

The protein localises to the cytoplasm. The protein resides in the cytosol. It localises to the nucleus. The enzyme catalyses [protein]-dithiol + NAD(+) = [protein]-disulfide + NADH + H(+). The catalysed reaction is [protein]-dithiol + NADP(+) = [protein]-disulfide + NADPH + H(+). In terms of biological role, functions as a redox-dependent negative regulator of the Wnt signaling pathway, possibly by preventing ubiquitination of DVL3 by the BCR(KLHL12) complex. May also function as a transcriptional regulator act as a regulator of protein phosphatase 2A (PP2A). In Homo sapiens (Human), this protein is Nucleoredoxin (NXN).